The following is a 352-amino-acid chain: ADP-ribosylation factor GTPase-activating protein GCS1 (352 aa).

An Arf-GAP domain is found at 11-127 (RRRLLQLQKI…LTCLCEDRVF (117 aa)). The C4-type zinc-finger motif lies at 26 to 49 (CMDCGAPNPQWATPKFGAFICLEC). The segment covering 138 to 151 (SKLSATSQTAASAT) has biased composition (low complexity). Disordered stretches follow at residues 138-181 (SKLS…ANFQ) and 196-231 (NQSR…GSSN). Thr-151 is modified (phosphothreonine). The residue at position 157 (Ser-157) is a Phosphoserine. Position 161 is a phosphothreonine (Thr-161). Position 168 is a phosphoserine (Ser-168). The segment covering 168–179 (SATPANSSNGAN) has biased composition (polar residues). A Phosphothreonine modification is found at Thr-170. Ser-260 is subject to Phosphoserine. The span at 315–330 (NGNAEDSSTAGNTTHT) shows a compositional bias: polar residues. The tract at residues 315–352 (NGNAEDSSTAGNTTHTEYQKIDNNDKKNEQDEDKWDDF) is disordered. Positions 331-343 (EYQKIDNNDKKNE) are enriched in basic and acidic residues.

Its subcellular location is the cytoplasm. The protein resides in the mitochondrion. It localises to the perinuclear region. The protein localises to the golgi apparatus. GTPase-activating protein (GAP) for ARF1 and ARF2. Involved in intracellular vesicular transport. Required for transport from the trans-Golgi network. Implicated in the regulation of retrograde transport from the Golgi to the ER and in actin cytoskeletal organization. May be involved in the maintenance of mitochondrial morphology, possibly through organizing the actin cytoskeleton in Saccharomyces. The protein is ADP-ribosylation factor GTPase-activating protein GCS1 (GCS1) of Saccharomyces cerevisiae (strain ATCC 204508 / S288c) (Baker's yeast).